The primary structure comprises 159 residues: Ribosome maturation factor RimP (159 aa).

It belongs to the RimP family.

It localises to the cytoplasm. In terms of biological role, required for maturation of 30S ribosomal subunits. This chain is Ribosome maturation factor RimP, found in Geotalea uraniireducens (strain Rf4) (Geobacter uraniireducens).